Consider the following 349-residue polypeptide: 5-deoxyribose 1-phosphate isomerase (349 aa).

Substrate-binding positions include Arg-49–Ala-51, Arg-92, and Gln-199. Asp-240 serves as the catalytic Proton donor. Residue Asn-250–Lys-251 participates in substrate binding.

Belongs to the EIF-2B alpha/beta/delta subunits family. DrdI subfamily.

It catalyses the reaction 5-deoxy-alpha-D-ribose 1-phosphate = 5-deoxy-D-ribulose 1-phosphate. Its pathway is carbohydrate degradation. Catalyzes the isomerization of 5-deoxy-alpha-D-ribose 1-phosphate to 5-deoxy-D-ribulose 1-phosphate, as part of a 5-deoxyribose salvage pathway that recycles this toxic radical SAM enzyme by-product to mainstream metabolites. The sequence is that of 5-deoxyribose 1-phosphate isomerase from Clostridium botulinum (strain Kyoto / Type A2).